We begin with the raw amino-acid sequence, 305 residues long: MPIRIPDTLPARETLLKEGVAVMTETDAVRQDIRPLQIALLNLMPNKIRTETQIARLIGASPLQVELTLVRVGGHTPKNTSQEHLISFYQTWEEIRERKFDGFIITGAPIEQMPFEEVNYWEELTQIFDWTQTNVHSPFYICWGAMAAAYHFHGLPKYQLEAKAFGVFRHRNLDLASPYLSGFSDDFAIPVSRWTEVRRADVLERQSLRLLIDSDDTGPCLLEDRARRSLYMFNHVEYDSFSLKEEFERDREAGKQIQVPFGYYPGDDPARQPLNRWRSHAHLLFGNWINQTYQSTPFSLDEIGQ.

Cysteine 142 (acyl-thioester intermediate) is an active-site residue. Substrate-binding residues include lysine 163 and serine 192. Histidine 235 serves as the catalytic Proton acceptor. Glutamate 237 is an active-site residue. Arginine 249 contacts substrate.

The protein belongs to the MetA family.

Its subcellular location is the cytoplasm. It carries out the reaction L-homoserine + acetyl-CoA = O-acetyl-L-homoserine + CoA. Its pathway is amino-acid biosynthesis; L-methionine biosynthesis via de novo pathway; O-acetyl-L-homoserine from L-homoserine: step 1/1. Functionally, transfers an acetyl group from acetyl-CoA to L-homoserine, forming acetyl-L-homoserine. The chain is Homoserine O-acetyltransferase from Hyphomonas neptunium (strain ATCC 15444).